The primary structure comprises 219 residues: Nuclear transcription factor Y subunit B-8 (219 aa).

Residues 1-26 (MPDSDNDSGGPSNYAGGELSSPREQD) are disordered. The DNA-binding element occupies 29-35 (LPIANVS). The segment at 56–67 (VQECVSEFISFI) is subunit association domain (SAD). Residues 119 to 134 (AAASTTGAGTSAASTT) show a composition bias toward low complexity. Disordered regions lie at residues 119 to 142 (AAAS…QHTA) and 166 to 219 (GQPM…NRGA). Positions 190 to 206 (GGRGGFGHHPGGGGGGS) are enriched in gly residues.

It belongs to the NFYB/HAP3 subunit family. In terms of assembly, heterotrimeric transcription factor composed of three components, NF-YA, NF-YB and NF-YC. NF-YB and NF-YC must interact and dimerize for NF-YA association and DNA binding. Interacts with NFYC2, NFYC4 and NFYC6.

Its subcellular location is the cytoplasm. Its function is as follows. Component of the NF-Y/HAP transcription factor complex. This is Nuclear transcription factor Y subunit B-8 from Oryza sativa subsp. japonica (Rice).